The sequence spans 338 residues: P2Y purinoceptor 14 (338 aa).

Topologically, residues 1-29 (MNNSTTTDPPNQPCSWNTLITKQIIPVLY) are extracellular. N-linked (GlcNAc...) asparagine glycans are attached at residues Asn-2 and Asn-3. Residues 30 to 50 (GMVFITGLLLNGISGWIFFYV) form a helical membrane-spanning segment. Topologically, residues 51–55 (PSSKS) are cytoplasmic. The helical transmembrane segment at 56–76 (FIIYLKNIVVADFLMGLTFPF) threads the bilayer. Residues 77-96 (KVLGDSGLGPWQVNVFVCRV) lie on the Extracellular side of the membrane. Cys-94 and Cys-172 are disulfide-bonded. A helical membrane pass occupies residues 97–117 (SAVIFYVNMYVSIVFFGLISF). The Cytoplasmic segment spans residues 118–139 (DRYYKIVKPLLTSIVQSVNYSK). The chain crosses the membrane as a helical span at residues 140-160 (LLSVLVWMLMLLLAVPNIILT). The Extracellular segment spans residues 161–188 (NQGVKEVTKIQCMELKNELGRKWHKASN). The helical transmembrane segment at 189 to 209 (YIFVSIFWVVFLLLIVFYTAI) threads the bilayer. Over 210-234 (TRKIFKSHLKSRKNSTSVKRKSSRN) the chain is Cytoplasmic. The chain crosses the membrane as a helical span at residues 235–255 (IFSIVLVFVVCFVPYHIARIP). Residues 256–278 (YTKSQTEGHYSCRTKETLLYAKE) lie on the Extracellular side of the membrane. Residues 279 to 299 (FTLLLSAANVCLDPIIYFFLC) traverse the membrane as a helical segment. Residues 300–338 (QPFREVLNKKLHMSLKVQNDLEVSKTKRENAIHESTDTL) lie on the Cytoplasmic side of the membrane.

It belongs to the G-protein coupled receptor 1 family.

The protein localises to the cell membrane. In terms of biological role, receptor for UDP-glucose coupled to G-proteins. The protein is P2Y purinoceptor 14 (P2ry14) of Mus musculus (Mouse).